The sequence spans 134 residues: 6,7-dimethyl-8-ribityllumazine synthase (134 aa).

Residues Phe12, 44–46 (VFD), and 68–70 (SVI) each bind 5-amino-6-(D-ribitylamino)uracil. A (2S)-2-hydroxy-3-oxobutyl phosphate-binding site is contributed by 73–74 (ET). His76 (proton donor) is an active-site residue. Leu101 contacts 5-amino-6-(D-ribitylamino)uracil. Arg116 is a (2S)-2-hydroxy-3-oxobutyl phosphate binding site.

It belongs to the DMRL synthase family.

It carries out the reaction (2S)-2-hydroxy-3-oxobutyl phosphate + 5-amino-6-(D-ribitylamino)uracil = 6,7-dimethyl-8-(1-D-ribityl)lumazine + phosphate + 2 H2O + H(+). Its pathway is cofactor biosynthesis; riboflavin biosynthesis; riboflavin from 2-hydroxy-3-oxobutyl phosphate and 5-amino-6-(D-ribitylamino)uracil: step 1/2. Catalyzes the formation of 6,7-dimethyl-8-ribityllumazine by condensation of 5-amino-6-(D-ribitylamino)uracil with 3,4-dihydroxy-2-butanone 4-phosphate. This is the penultimate step in the biosynthesis of riboflavin. The sequence is that of 6,7-dimethyl-8-ribityllumazine synthase from Methanosarcina acetivorans (strain ATCC 35395 / DSM 2834 / JCM 12185 / C2A).